A 135-amino-acid chain; its full sequence is Large ribosomal subunit protein uL16 (135 aa).

It belongs to the universal ribosomal protein uL16 family. In terms of assembly, part of the 50S ribosomal subunit.

Functionally, binds 23S rRNA and is also seen to make contacts with the A and possibly P site tRNAs. The sequence is that of Large ribosomal subunit protein uL16 from Bdellovibrio bacteriovorus (strain ATCC 15356 / DSM 50701 / NCIMB 9529 / HD100).